Reading from the N-terminus, the 451-residue chain is Cyclin-dependent kinase 14 (451 aa).

A phosphoserine mark is found at S60 and S77. The interval 84–114 (NFKTSSTGKESPKVRRHSSPSSPTSPKFGKA) is disordered. The residue at position 116 (S116) is a Phosphoserine. Residues 117–401 (YEKLEKLGEG…AQAALSHEYF (285 aa)) enclose the Protein kinase domain. ATP is bound by residues 123–131 (LGEGSYATV) and K146. D238 acts as the Proton acceptor in catalysis.

It belongs to the protein kinase superfamily. CMGC Ser/Thr protein kinase family. CDC2/CDKX subfamily. In terms of assembly, found in a complex with LRP6, CCNY and CAPRIN2 during G2/M stage; CAPRIN2 functions as a scaffold for the complex by binding to CCNY via its N terminus and to CDK14 via its C terminus. Interacts with CCNY; CCNY mediates its recruitment to the plasma membrane and promotes phosphorylation of LRP6. Interacts with CCDN3 and CDKN1A. Interacts with SEPT8. Interacts with 14-3-3 proteina YWHAB, YWHAE, YWHAH and YWHAQ.

It localises to the cell membrane. The protein resides in the cytoplasm. Its subcellular location is the nucleus. It catalyses the reaction L-seryl-[protein] + ATP = O-phospho-L-seryl-[protein] + ADP + H(+). The enzyme catalyses L-threonyl-[protein] + ATP = O-phospho-L-threonyl-[protein] + ADP + H(+). Serine/threonine-protein kinase activity is promoted by associated cyclins CCDN3 and CCNY and repressed by CDKN1A. Serine/threonine-protein kinase involved in the control of the eukaryotic cell cycle, whose activity is controlled by an associated cyclin. Acts as a cell-cycle regulator of Wnt signaling pathway during G2/M phase by mediating the phosphorylation of LRP6 at 'Ser-1490', leading to the activation of the Wnt signaling pathway. Acts as a regulator of cell cycle progression and cell proliferation via its interaction with CCDN3. Phosphorylates RB1 in vitro, however the relevance of such result remains to be confirmed in vivo. May also play a role in meiosis, neuron differentiation and may indirectly act as a negative regulator of insulin-responsive glucose transport. The chain is Cyclin-dependent kinase 14 (CDK14) from Plecturocebus moloch (Dusky titi monkey).